The primary structure comprises 469 residues: 3-isopropylmalate dehydratase large subunit (469 aa).

[4Fe-4S] cluster contacts are provided by Cys349, Cys410, and Cys413.

It belongs to the aconitase/IPM isomerase family. LeuC type 1 subfamily. Heterodimer of LeuC and LeuD. The cofactor is [4Fe-4S] cluster.

It carries out the reaction (2R,3S)-3-isopropylmalate = (2S)-2-isopropylmalate. Its pathway is amino-acid biosynthesis; L-leucine biosynthesis; L-leucine from 3-methyl-2-oxobutanoate: step 2/4. Its function is as follows. Catalyzes the isomerization between 2-isopropylmalate and 3-isopropylmalate, via the formation of 2-isopropylmaleate. The chain is 3-isopropylmalate dehydratase large subunit from Neisseria meningitidis serogroup A / serotype 4A (strain DSM 15465 / Z2491).